We begin with the raw amino-acid sequence, 205 residues long: N-(5'-phosphoribosyl)anthranilate isomerase (205 aa).

The protein belongs to the TrpF family.

It carries out the reaction N-(5-phospho-beta-D-ribosyl)anthranilate = 1-(2-carboxyphenylamino)-1-deoxy-D-ribulose 5-phosphate. Its pathway is amino-acid biosynthesis; L-tryptophan biosynthesis; L-tryptophan from chorismate: step 3/5. The polypeptide is N-(5'-phosphoribosyl)anthranilate isomerase (Marinomonas sp. (strain MWYL1)).